Consider the following 338-residue polypeptide: Beta-ketoacyl-[acyl-carrier-protein] synthase III (338 aa).

Residues Cys119 and His261 contribute to the active site. Positions 262–266 (QANQR) are ACP-binding. The active site involves Asn291.

Belongs to the thiolase-like superfamily. FabH family. Homodimer.

It is found in the cytoplasm. The enzyme catalyses malonyl-[ACP] + acetyl-CoA + H(+) = 3-oxobutanoyl-[ACP] + CO2 + CoA. Its pathway is lipid metabolism; fatty acid biosynthesis. Catalyzes the condensation reaction of fatty acid synthesis by the addition to an acyl acceptor of two carbons from malonyl-ACP. Catalyzes the first condensation reaction which initiates fatty acid synthesis and may therefore play a role in governing the total rate of fatty acid production. Possesses both acetoacetyl-ACP synthase and acetyl transacylase activities. Its substrate specificity determines the biosynthesis of branched-chain and/or straight-chain of fatty acids. In Prochlorococcus marinus (strain NATL2A), this protein is Beta-ketoacyl-[acyl-carrier-protein] synthase III.